A 398-amino-acid polypeptide reads, in one-letter code: Phosphoglycerate kinase (398 aa).

Substrate-binding positions include 21–23 (DFN), Arg-36, 59–62 (HLGR), Arg-119, and Arg-157. ATP contacts are provided by residues Lys-208, Gly-296, Glu-327, and 354-357 (GGDS).

Belongs to the phosphoglycerate kinase family. As to quaternary structure, monomer.

It is found in the cytoplasm. The catalysed reaction is (2R)-3-phosphoglycerate + ATP = (2R)-3-phospho-glyceroyl phosphate + ADP. The protein operates within carbohydrate degradation; glycolysis; pyruvate from D-glyceraldehyde 3-phosphate: step 2/5. The protein is Phosphoglycerate kinase of Streptococcus pneumoniae (strain 70585).